A 572-amino-acid polypeptide reads, in one-letter code: Urease subunit alpha (572 aa).

The region spanning 134–572 (GGIDSHIHFI…LPLTQRYFLF (439 aa)) is the Urease domain. H139, H141, and K222 together coordinate Ni(2+). N6-carboxylysine is present on K222. H224 contributes to the substrate binding site. Ni(2+)-binding residues include H251 and H277. H325 (proton donor) is an active-site residue. Residue D365 participates in Ni(2+) binding.

The protein belongs to the metallo-dependent hydrolases superfamily. Urease alpha subunit family. In terms of assembly, heterotrimer of UreA (gamma), UreB (beta) and UreC (alpha) subunits. Three heterotrimers associate to form the active enzyme. Ni cation is required as a cofactor. Carboxylation allows a single lysine to coordinate two nickel ions.

Its subcellular location is the cytoplasm. The catalysed reaction is urea + 2 H2O + H(+) = hydrogencarbonate + 2 NH4(+). It participates in nitrogen metabolism; urea degradation; CO(2) and NH(3) from urea (urease route): step 1/1. The chain is Urease subunit alpha from Variovorax paradoxus (strain S110).